The following is a 351-amino-acid chain: UDP-glucose 4-epimerase 5 (351 aa).

Residues 13–15, 34–38, 64–65, Phe86, and Lys90 each bind NAD(+); these read GYI, DNLDN, and DL. Position 130 to 132 (130 to 132) interacts with substrate; it reads SAT. Tyr154 serves as the catalytic Proton acceptor. Positions 158 and 182 each coordinate NAD(+). Substrate contacts are provided by residues 182–184, 203–205, 221–223, Arg236, and 298–301; these read YFN, NNL, TVF, and RPGD.

This sequence belongs to the NAD(P)-dependent epimerase/dehydratase family. Forms homodimers and heterodimers. It depends on NAD(+) as a cofactor. Widely expressed.

It carries out the reaction UDP-alpha-D-glucose = UDP-alpha-D-galactose. It participates in carbohydrate metabolism; galactose metabolism. Its activity is regulated as follows. Enhanced activity by NaCl. Inhibited by UDP. Catalyzes the interconversion between UDP-glucose and UDP-galactose. The chain is UDP-glucose 4-epimerase 5 from Arabidopsis thaliana (Mouse-ear cress).